Here is a 631-residue protein sequence, read N- to C-terminus: Poly(A)-specific ribonuclease PARN (631 aa).

Positions 28 and 30 each coordinate a divalent metal cation. Positions 147–173 are disordered; it reads EDRRSQSNGASTMSYISPNSSKTPVSI. Polar residues predominate over residues 152 to 170; the sequence is QSNGASTMSYISPNSSKTP. One can recognise an R3H domain in the interval 178–244; the sequence is KGFIDKVVER…ERYIVISKVD (67 aa). A divalent metal cation-binding residues include D291 and D381. Positions 568 to 631 are disordered; that stretch reads SPIQEEAASD…SVLFEVPDTW (64 aa).

This sequence belongs to the CAF1 family. As to quaternary structure, component of a complex at least composed of cpeb1, cpsf1, papd4/gld2, pabpc1/ePAB, parn and sympk. It depends on a divalent metal cation as a cofactor. A 62 kDa form, which is produced by proteolytic cleavage, also exists. As to expression, in retina, it is constitutively present in most retinal cells, including the photoreceptors.

It is found in the cytoplasm. It localises to the nucleus. It carries out the reaction Exonucleolytic cleavage of poly(A) to 5'-AMP.. Its function is as follows. 3'-exoribonuclease that has a preference for poly(A) tails of mRNAs, thereby efficiently degrading poly(A) tails. Exonucleolytic degradation of the poly(A) tail is often the first step in the decay of eukaryotic mRNAs. Required during meiotic maturation to silence certain maternal mRNAs translationally. Does not require an adenosine residue at the 3' end, however, the addition of 25 non-adenylate residues at the 3' terminus, or a 3' terminal phosphate is inhibitory. Involved in dormant mRNAs regulation during oocyte maturation by counteracting polyadenylation mediated by papd4/gld2nt in immature eggs. During maturation it is excluded from the ribonucleoprotein complex, allowing poly(A) elongation by papd4/gld2nt and activation of mRNAs. The sequence is that of Poly(A)-specific ribonuclease PARN (parn) from Xenopus laevis (African clawed frog).